A 65-amino-acid chain; its full sequence is Large ribosomal subunit protein uL29 (65 aa).

This sequence belongs to the universal ribosomal protein uL29 family.

This chain is Large ribosomal subunit protein uL29, found in Acidovorax ebreus (strain TPSY) (Diaphorobacter sp. (strain TPSY)).